An 868-amino-acid chain; its full sequence is Paladin (868 aa).

Residue Gly-2 is the site of N-myristoyl glycine attachment.

This sequence belongs to the paladin family.

Its subcellular location is the cytoplasm. The protein resides in the cytosol. In Gallus gallus (Chicken), this protein is Paladin (PALD1).